Consider the following 958-residue polypeptide: Eukaryotic translation initiation factor 3 subunit A (958 aa).

A coiled-coil region spans residues 93 to 123 (MHLATERAELARNQAQALEEALDVEDLEADK). In terms of domain architecture, PCI spans 316 to 513 (LQLIASSVVL…GLSSLVNRVL (198 aa)). 2 coiled-coil regions span residues 548–696 (EALS…AKRE) and 796–861 (LRSE…LRKS). A compositionally biased stretch (basic and acidic residues) spans 804–859 (KRLQEEEEARKREEAERRKKEEAERQAKLDEIAEKQRRRMLELEEKEKREREEILR). Positions 804–958 (KRLQEEEEAR…SRTSWPASRR (155 aa)) are disordered. Positions 877-894 (PAELGGAAPIPAAAATAP) are enriched in low complexity. Over residues 929-942 (KPDDRPSWRDERKP) the composition is skewed to basic and acidic residues. Residues 946-958 (GSGSRTSWPASRR) show a composition bias toward polar residues.

Belongs to the eIF-3 subunit A family. Component of the eukaryotic translation initiation factor 3 (eIF-3) complex.

The protein resides in the cytoplasm. Its function is as follows. RNA-binding component of the eukaryotic translation initiation factor 3 (eIF-3) complex, which is involved in protein synthesis of a specialized repertoire of mRNAs and, together with other initiation factors, stimulates binding of mRNA and methionyl-tRNAi to the 40S ribosome. The eIF-3 complex specifically targets and initiates translation of a subset of mRNAs involved in cell proliferation. This is Eukaryotic translation initiation factor 3 subunit A (TIF3A1) from Nicotiana tabacum (Common tobacco).